A 220-amino-acid chain; its full sequence is Uracil phosphoribosyltransferase 2 (220 aa).

77-80 (ARDI) lines the GTP pocket. Residues Arg-87 and Arg-113 each contribute to the 5-phospho-alpha-D-ribose 1-diphosphate site. Arg-134 is a GTP binding site. 5-phospho-alpha-D-ribose 1-diphosphate is bound by residues Asp-140 and 140 to 148 (DPLLATGNS). Tyr-204 serves as a coordination point for D-ribose 5-phosphate. Uracil is bound by residues Val-205 and 210–212 (GDF). Residue Asp-211 coordinates 5-phospho-alpha-D-ribose 1-diphosphate.

This sequence belongs to the UPRTase family. It depends on Mg(2+) as a cofactor.

It carries out the reaction UMP + diphosphate = 5-phospho-alpha-D-ribose 1-diphosphate + uracil. It participates in pyrimidine metabolism; UMP biosynthesis via salvage pathway; UMP from uracil: step 1/1. With respect to regulation, allosterically activated by GTP. In terms of biological role, catalyzes the conversion of uracil and 5-phospho-alpha-D-ribose 1-diphosphate (PRPP) to UMP and diphosphate. The chain is Uracil phosphoribosyltransferase 2 from Schizosaccharomyces pombe (strain 972 / ATCC 24843) (Fission yeast).